The chain runs to 146 residues: Protein PBDC1 homolog (146 aa).

Belongs to the PBDC1 family.

It localises to the cytoplasm. The sequence is that of Protein PBDC1 homolog from Saccharomyces cerevisiae (strain ATCC 204508 / S288c) (Baker's yeast).